We begin with the raw amino-acid sequence, 254 residues long: tRNA (guanine-N(1)-)-methyltransferase (254 aa).

Residues glycine 117 and 136–141 (LGDFVL) each bind S-adenosyl-L-methionine.

This sequence belongs to the RNA methyltransferase TrmD family. As to quaternary structure, homodimer.

Its subcellular location is the cytoplasm. The catalysed reaction is guanosine(37) in tRNA + S-adenosyl-L-methionine = N(1)-methylguanosine(37) in tRNA + S-adenosyl-L-homocysteine + H(+). Specifically methylates guanosine-37 in various tRNAs. In Levilactobacillus brevis (strain ATCC 367 / BCRC 12310 / CIP 105137 / JCM 1170 / LMG 11437 / NCIMB 947 / NCTC 947) (Lactobacillus brevis), this protein is tRNA (guanine-N(1)-)-methyltransferase.